Consider the following 442-residue polypeptide: 26S proteasome regulatory subunit 6A (442 aa).

Position 12 is a phosphoserine (Ser12). ATP is bound at residue 230–237 (GPPGTGKT). Phosphoserine is present on Ser379.

This sequence belongs to the AAA ATPase family. In terms of assembly, component of the 19S proteasome regulatory particle complex. The 26S proteasome consists of a 20S core particle (CP) and two 19S regulatory subunits (RP). The regulatory particle is made of a lid composed of 9 subunits, a base containing 6 ATPases including PSMC3 and few additional components. Interacts with PAAF1.

Its subcellular location is the cytoplasm. It is found in the nucleus. Its function is as follows. Component of the 26S proteasome, a multiprotein complex involved in the ATP-dependent degradation of ubiquitinated proteins. This complex plays a key role in the maintenance of protein homeostasis by removing misfolded or damaged proteins, which could impair cellular functions, and by removing proteins whose functions are no longer required. Therefore, the proteasome participates in numerous cellular processes, including cell cycle progression, apoptosis, or DNA damage repair. PSMC3 belongs to the heterohexameric ring of AAA (ATPases associated with diverse cellular activities) proteins that unfolds ubiquitinated target proteins that are concurrently translocated into a proteolytic chamber and degraded into peptides. The sequence is that of 26S proteasome regulatory subunit 6A (Psmc3) from Mus musculus (Mouse).